A 468-amino-acid chain; its full sequence is A-type ATP synthase subunit B (468 aa).

Belongs to the ATPase alpha/beta chains family. Has multiple subunits with at least A(3), B(3), C, D, E, F, H, I and proteolipid K(x).

Its subcellular location is the cell membrane. Functionally, component of the A-type ATP synthase that produces ATP from ADP in the presence of a proton gradient across the membrane. The B chain is a regulatory subunit. The protein is A-type ATP synthase subunit B of Haloferax volcanii (strain ATCC 29605 / DSM 3757 / JCM 8879 / NBRC 14742 / NCIMB 2012 / VKM B-1768 / DS2) (Halobacterium volcanii).